We begin with the raw amino-acid sequence, 64 residues long: U-scoloptoxin(14)-Er1a (64 aa).

The signal sequence occupies residues 1–23 (MRPSFPLLLIMLLVCTAHHMVSG).

It belongs to the scoloptoxin-14 family. Post-translationally, contains 4 disulfide bonds. Expressed by the venom gland.

The protein resides in the secreted. The polypeptide is U-scoloptoxin(14)-Er1a (Ethmostigmus rubripes (Giant centipede)).